Reading from the N-terminus, the 594-residue chain is Arrestin domain-containing protein C584.15c (594 aa).

Polar residues predominate over residues 368 to 398 (NPQLQSGFTTPNLSRRNSSDFGPNSPVNIHS). Disordered stretches follow at residues 368–417 (NPQL…NSNA) and 531–594 (EATR…RGVR). The segment covering 404 to 417 (SGQQPSSPASNSNA) has biased composition (low complexity). The span at 534-552 (RPSSPTESVEIPSNTTTIA) shows a compositional bias: polar residues. Positions 565–574 (PSTPAPPLPS) are enriched in pro residues. Phosphoserine is present on S584.

This sequence belongs to the arrestin family.

This chain is Arrestin domain-containing protein C584.15c, found in Schizosaccharomyces pombe (strain 972 / ATCC 24843) (Fission yeast).